The primary structure comprises 122 residues: MSQISRKQQTQKRHRRLRRHITGTSDRPRLAVFRSNNHIYAQVIDDAAQSTLCSASTVDKELRTGLKAPAGSCDASVAVGELVAKRAMAKGIQQVVFDRGGNLYHGRIKALADAAREAGLQF.

The disordered stretch occupies residues 1–25 (MSQISRKQQTQKRHRRLRRHITGTS). Residues 9 to 21 (QTQKRHRRLRRHI) are compositionally biased toward basic residues.

This sequence belongs to the universal ribosomal protein uL18 family. Part of the 50S ribosomal subunit; part of the 5S rRNA/L5/L18/L25 subcomplex. Contacts the 5S and 23S rRNAs.

In terms of biological role, this is one of the proteins that bind and probably mediate the attachment of the 5S RNA into the large ribosomal subunit, where it forms part of the central protuberance. The protein is Large ribosomal subunit protein uL18 of Synechococcus sp. (strain CC9605).